We begin with the raw amino-acid sequence, 128 residues long: Calcitonin gene-related peptide 1 (128 aa).

The first 25 residues, 1-25, serve as a signal peptide directing secretion; it reads MGFLKFSPFLVVSILLLYQACSLQA. Positions 26–80 are excised as a propeptide; the sequence is VPLRSILESSPGMATLSEEEVRLLAALVQDYMQMKARELEQEEEQEAEGSSVTAQ. An intrachain disulfide couples cysteine 84 to cysteine 89. Phenylalanine 119 bears the Phenylalanine amide mark. Residues 125 to 128 constitute a propeptide that is removed on maturation; sequence DLQA.

Belongs to the calcitonin family. In terms of tissue distribution, detected in nerve cells of cerebrum, hippocampus and pons/midbrain in newborns, and only in nerve cells of pons/midbrain in adult.

The protein resides in the secreted. CGRP1/CALCA is a peptide hormone that induces vasodilation mediated by the CALCRL-RAMP1 receptor complex. Dilates a variety of vessels including the coronary, cerebral and systemic vasculature. Its abundance in the CNS also points toward a neurotransmitter or neuromodulator role. It also elevates platelet cAMP. CGRP1 can also bind and activate CALCR-RAMP1 (AMYR1) receptor complex. The sequence is that of Calcitonin gene-related peptide 1 from Mus musculus (Mouse).